The following is a 44-amino-acid chain: Cytochrome b559 subunit beta (44 aa).

A helical transmembrane segment spans residues 19 to 35 (WLSIHALAVPTIFFLGS). Histidine 23 is a binding site for heme.

The protein belongs to the PsbE/PsbF family. In terms of assembly, heterodimer of an alpha subunit and a beta subunit. PSII is composed of 1 copy each of membrane proteins PsbA, PsbB, PsbC, PsbD, PsbE, PsbF, PsbH, PsbI, PsbJ, PsbK, PsbL, PsbM, PsbT, PsbX, PsbY, PsbZ, Psb30/Ycf12, at least 3 peripheral proteins of the oxygen-evolving complex and a large number of cofactors. It forms dimeric complexes. It depends on heme b as a cofactor.

It localises to the plastid. Its subcellular location is the chloroplast thylakoid membrane. This b-type cytochrome is tightly associated with the reaction center of photosystem II (PSII). PSII is a light-driven water:plastoquinone oxidoreductase that uses light energy to abstract electrons from H(2)O, generating O(2) and a proton gradient subsequently used for ATP formation. It consists of a core antenna complex that captures photons, and an electron transfer chain that converts photonic excitation into a charge separation. In Tetradesmus obliquus (Green alga), this protein is Cytochrome b559 subunit beta.